The sequence spans 269 residues: Mitochondrial genome maintenance protein MGM101 (269 aa).

Residues 1 to 30 (MKSIFKVRGCVSHAAQFCQKRTVVSTGTSN) constitute a mitochondrion transit peptide.

This sequence belongs to the MGM101 family.

It is found in the mitochondrion matrix. It localises to the mitochondrion nucleoid. Its function is as follows. Performs an essential function in the repair of oxidatively damaged mtDNA that is required for the maintenance of the mitochondrial genome. Binds to DNA. In Saccharomyces cerevisiae (strain ATCC 204508 / S288c) (Baker's yeast), this protein is Mitochondrial genome maintenance protein MGM101 (MGM101).